We begin with the raw amino-acid sequence, 63 residues long: Small integral membrane protein 43 (63 aa).

Important for interaction with SLC2A1 and SLC2A3 stretches follow at residues 7–29 (LLLY…FVVI) and 51–57 (HREPWGF). Residues 9 to 29 (LYLALFFFLLFLLFLLLFVVI) traverse the membrane as a helical segment.

As to quaternary structure, interacts with glucose transporters SLC2A1/GLUT1 and SLC2A3/GLUT3; the interactions may promote SLC2A1- and SLC2A3-mediated glucose transport to meet the energy needs of mesendoderm differentiation.

The protein localises to the cell membrane. Functionally, required for mesendoderm differentiation. Interacts with glucose transporters and promotes glucose uptake. Probably augments the glucose uptake capacity of glucose transporter proteins to meet the energy needs of mesendoderm differentiation. The protein is Small integral membrane protein 43 of Homo sapiens (Human).